A 182-amino-acid chain; its full sequence is Protein Syd (182 aa).

It belongs to the Syd family.

It is found in the cell inner membrane. Interacts with the SecY protein in vivo. May bind preferentially to an uncomplexed state of SecY, thus functioning either as a chelating agent for excess SecY in the cell or as a regulatory factor that negatively controls the translocase function. The protein is Protein Syd of Pectobacterium atrosepticum (strain SCRI 1043 / ATCC BAA-672) (Erwinia carotovora subsp. atroseptica).